Reading from the N-terminus, the 148-residue chain is Phosphopantetheine adenylyltransferase (148 aa).

This sequence belongs to the eukaryotic CoaD family.

It is found in the cytoplasm. The enzyme catalyses (R)-4'-phosphopantetheine + ATP + H(+) = 3'-dephospho-CoA + diphosphate. It participates in cofactor biosynthesis; coenzyme A biosynthesis. Functionally, reversibly transfers an adenylyl group from ATP to 4'-phosphopantetheine, yielding dephospho-CoA (dPCoA) and pyrophosphate. The chain is Phosphopantetheine adenylyltransferase from Archaeoglobus fulgidus (strain ATCC 49558 / DSM 4304 / JCM 9628 / NBRC 100126 / VC-16).